Consider the following 358-residue polypeptide: Methylthioribose-1-phosphate isomerase (358 aa).

Substrate is bound by residues 54–56, Arg96, and Gln205; that span reads RGA. Residue Asp246 is the Proton donor of the active site. 256-257 provides a ligand contact to substrate; it reads NK.

It belongs to the eIF-2B alpha/beta/delta subunits family. MtnA subfamily.

It carries out the reaction 5-(methylsulfanyl)-alpha-D-ribose 1-phosphate = 5-(methylsulfanyl)-D-ribulose 1-phosphate. It functions in the pathway amino-acid biosynthesis; L-methionine biosynthesis via salvage pathway; L-methionine from S-methyl-5-thio-alpha-D-ribose 1-phosphate: step 1/6. Catalyzes the interconversion of methylthioribose-1-phosphate (MTR-1-P) into methylthioribulose-1-phosphate (MTRu-1-P). The protein is Methylthioribose-1-phosphate isomerase of Stutzerimonas stutzeri (strain A1501) (Pseudomonas stutzeri).